A 319-amino-acid polypeptide reads, in one-letter code: Probable NAD(P)H-dependent D-xylose reductase xyl1 (319 aa).

An N-linked (GlcNAc...) asparagine glycan is attached at Asn26. Tyr50 acts as the Proton donor in catalysis. Residue His112 participates in substrate binding. N-linked (GlcNAc...) asparagine glycosylation is found at Asn141 and Asn167. Residues 166–167 (SN), 215–224 (SSFGPLSFLE), and 271–281 (KSNNPQRLKQN) contribute to the NAD(+) site.

The protein belongs to the aldo/keto reductase family.

The enzyme catalyses xylitol + NAD(+) = D-xylose + NADH + H(+). It catalyses the reaction xylitol + NADP(+) = D-xylose + NADPH + H(+). Its pathway is carbohydrate metabolism; D-xylose degradation. In terms of biological role, catalyzes the initial reaction in the xylose utilization pathway by reducing D-xylose into xylitol. Xylose is a major component of hemicelluloses such as xylan. Most fungi utilize D-xylose via three enzymatic reactions, xylose reductase (XR), xylitol dehydrogenase (XDH), and xylulokinase, to form xylulose 5-phosphate, which enters pentose phosphate pathway. The polypeptide is Probable NAD(P)H-dependent D-xylose reductase xyl1 (xyl1) (Aspergillus niger (strain ATCC MYA-4892 / CBS 513.88 / FGSC A1513)).